The chain runs to 75 residues: Protein Tlp homolog (75 aa).

Belongs to the Tlp family.

This is Protein Tlp homolog from Clostridium acetobutylicum (strain ATCC 824 / DSM 792 / JCM 1419 / IAM 19013 / LMG 5710 / NBRC 13948 / NRRL B-527 / VKM B-1787 / 2291 / W).